Here is a 207-residue protein sequence, read N- to C-terminus: ADP-ribosylation factor (207 aa).

Residue Gly-2 is the site of N-myristoyl glycine attachment. Residues 32–39 (GLDGAGKT), 75–79 (DIGGQ), and 133–136 (NKID) each bind GTP.

It belongs to the small GTPase superfamily. Arf family.

The protein resides in the golgi apparatus. Functionally, GTP-binding protein involved in protein trafficking; may modulate vesicle budding and uncoating within the Golgi apparatus. This chain is ADP-ribosylation factor (ARF-1), found in Encephalitozoon cuniculi (strain GB-M1) (Microsporidian parasite).